Consider the following 54-residue polypeptide: Ovomucoid (54 aa).

One can recognise a Kazal-like domain in the interval 4-54 (VDCSDHPKPVCSLEYMPLCGSDSKTYSNKCDFCNAVVESNGTLTLSHFGKC). Cystine bridges form between cysteine 6–cysteine 36, cysteine 14–cysteine 33, and cysteine 22–cysteine 54. Residue asparagine 43 is glycosylated (N-linked (GlcNAc...) asparagine).

The protein resides in the secreted. The sequence is that of Ovomucoid from Rhea americana (Greater rhea).